The primary structure comprises 589 residues: uncharacterized protein (589 aa).

This is an uncharacterized protein from Bacillus anthracis.